A 227-amino-acid polypeptide reads, in one-letter code: ATP-dependent dethiobiotin synthetase BioD (227 aa).

13-18 (DIGKTY) lines the ATP pocket. Position 17 (T17) interacts with Mg(2+). The active site involves K38. S42 contributes to the substrate binding site. Residues D55, 116-119 (EGSG), and 179-180 (NN) contribute to the ATP site. D55 and E116 together coordinate Mg(2+).

This sequence belongs to the dethiobiotin synthetase family. As to quaternary structure, homodimer. The cofactor is Mg(2+).

Its subcellular location is the cytoplasm. The enzyme catalyses (7R,8S)-7,8-diammoniononanoate + CO2 + ATP = (4R,5S)-dethiobiotin + ADP + phosphate + 3 H(+). Its pathway is cofactor biosynthesis; biotin biosynthesis; biotin from 7,8-diaminononanoate: step 1/2. In terms of biological role, catalyzes a mechanistically unusual reaction, the ATP-dependent insertion of CO2 between the N7 and N8 nitrogen atoms of 7,8-diaminopelargonic acid (DAPA, also called 7,8-diammoniononanoate) to form a ureido ring. The chain is ATP-dependent dethiobiotin synthetase BioD from Clostridium botulinum (strain 657 / Type Ba4).